The primary structure comprises 421 residues: E3 ubiquitin-protein ligase RMD5 (421 aa).

Positions 176 to 236 constitute a CTLH domain; the sequence is EFIEMGQIVH…QIVKHGNPVE (61 aa). The RING-Gid-type zinc-finger motif lies at 361–404; the sequence is CPVLKEETTTENPPYSLACHHIISKKALDRLSKNGTITFKCPYC.

The protein belongs to the RMD5/GID2 family. Identified in the GID/CTLH complex. In the absence of stress, the complex exists as an inactive anticipatory complex (GID(Ant)), composed of VID30/GID1, the E3 ubiquitin-ligase RMD5/GID2, VID28/GID5, GID8, and the RING-like subunit FYV10/GID9, awaiting a substrate receptor to form the active E3 ligase complex. When cells are shifted to glucose-containing medium, the substrate receptor VID24/GID4 is induced and becomes part of the complex, named GID(SR4). Additionally, GID7 transforms the GID(SR4) E3 ligase core into a higher-order supramolecular assembly (Chelator-GID(SR4)) specifically tailored for FBP1 ubiquitination. Under osmotic or heat stress, the substrate receptor GID10 is induced and becomes part of the complex, named GID(SR10). Within the GID complex, interacts directly with GID8, FYV10/GID9 and VID28/GID5.

It is found in the cytoplasm. The catalysed reaction is S-ubiquitinyl-[E2 ubiquitin-conjugating enzyme]-L-cysteine + [acceptor protein]-L-lysine = [E2 ubiquitin-conjugating enzyme]-L-cysteine + N(6)-ubiquitinyl-[acceptor protein]-L-lysine.. Its pathway is protein modification; protein ubiquitination. In terms of biological role, E3 ubiquitin-protein ligase component of the GID E3 ligase complex recruiting N termini and catalyzing ubiquitination of proteins targeted for degradation. GID E3 is regulated through assembly with interchangeable N-degron-binding substrate receptors induced by distinct environmental perturbations. Required for the adaptation to the presence of glucose in the growth medium; mediates in association with the substrate receptor VID24/GID4 the degradation of enzymes involved in gluconeogenesis when cells are shifted to glucose-containing medium. Required for proteasome-dependent catabolite degradation of fructose-1,6-bisphosphatase (FBP1), malate dehydrogenase (MDH2), and other gluconeogenic enzymes. This Saccharomyces cerevisiae (strain ATCC 204508 / S288c) (Baker's yeast) protein is E3 ubiquitin-protein ligase RMD5.